The following is a 789-amino-acid chain: Polyribonucleotide nucleotidyltransferase (789 aa).

Positions 494 and 500 each coordinate Mg(2+). Positions 561 to 620 constitute a KH domain; it reads PRIESIFINKDKIRNVIGSGGKNIREICEKTGARVEIMQDGTVMIYAINNDAVEYAKNMI. An S1 motif domain is found at 630-697; that stretch reads GKVFDGTVIE…DREYVQLSMR (68 aa). Residues 709–789 are disordered; the sequence is GELYNIRKTN…NEVPRKPRFF (81 aa). Residues 737–749 show a composition bias toward basic residues; it reads SEKKRRGSGRSRR. Positions 763 to 780 are enriched in low complexity; the sequence is NNGFGNGNRSFNDNRNGN.

This sequence belongs to the polyribonucleotide nucleotidyltransferase family. It depends on Mg(2+) as a cofactor.

It localises to the cytoplasm. The catalysed reaction is RNA(n+1) + phosphate = RNA(n) + a ribonucleoside 5'-diphosphate. Involved in mRNA degradation. Catalyzes the phosphorolysis of single-stranded polyribonucleotides processively in the 3'- to 5'-direction. The sequence is that of Polyribonucleotide nucleotidyltransferase from Ehrlichia ruminantium (strain Gardel).